The sequence spans 192 residues: SRP-independent targeting protein 2 homolog (192 aa).

2 helical membrane passes run 16-36 and 102-122; these read ILTF…ILRF and WILI…YLLV. A disordered region spans residues 149-192; that stretch reads LNQPPQQQQQQQQQQHQQHATPSEPVLSKRQQKLRKKAAKYSRP. Residues 151–167 show a composition bias toward low complexity; that stretch reads QPPQQQQQQQQQQHQQH. Residues 178–192 show a composition bias toward basic residues; sequence RQQKLRKKAAKYSRP.

The protein belongs to the TMEM208 family.

The protein resides in the endoplasmic reticulum membrane. May function in a SRP (signal recognition particle) and GET (guided entry of tail-anchored proteins) independent pathway for targeting a broad range of substrate proteins to the endoplasmic reticulum. Has a role in meiosis. This Schizosaccharomyces pombe (strain 972 / ATCC 24843) (Fission yeast) protein is SRP-independent targeting protein 2 homolog.